The primary structure comprises 262 residues: Small ribosomal subunit protein eS1 (262 aa).

The protein belongs to the eukaryotic ribosomal protein eS1 family. Component of the small ribosomal subunit. Mature ribosomes consist of a small (40S) and a large (60S) subunit. The 40S subunit contains about 33 different proteins and 1 molecule of RNA (18S). The 60S subunit contains about 49 different proteins and 3 molecules of RNA (25S, 5.8S and 5S).

It localises to the cytoplasm. The chain is Small ribosomal subunit protein eS1 from Brassica campestris (Field mustard).